The primary structure comprises 534 residues: Blue-light-activated protein (534 aa).

One can recognise a PAS domain in the interval 20–93 (GKDIFFAAVE…QSIRDAIAQR (74 aa)). Residue Cys-70 is modified to S-4a-FMN cysteine. Residues 94–148 (NDISAEIINYRKDGSSFWNALFISPVYNDAGDLIYFFASQLDISRRKDAEEALRQ) form the PAC domain. One can recognise a Histidine kinase domain in the interval 161 to 390 (GIAHDFNNLL…TLRLYFPVDE (230 aa)). His-164 is subject to Phosphohistidine; by autocatalysis. The Response regulatory domain occupies 411-527 (RILIVEDRPD…DLARKVRQVL (117 aa)). Asp-461 is modified (4-aspartylphosphate).

In terms of processing, FMN binds covalently to cysteine after exposure to blue light and this bond is spontaneously broken in the dark.

It catalyses the reaction ATP + protein L-histidine = ADP + protein N-phospho-L-histidine.. In terms of biological role, photosensitive kinase and response regulator that is involved in increased bacterial virulence upon exposure to light. This Pseudomonas syringae pv. tomato (strain ATCC BAA-871 / DC3000) protein is Blue-light-activated protein.